A 222-amino-acid polypeptide reads, in one-letter code: Putative metal transport protein MJ1569 (222 aa).

6 helical membrane passes run 3–23 (IPDG…MIPI), 39–59 (LPLL…NLPV), 81–101 (WVAT…FGDG), 102–122 (GITC…FVGY), 135–155 (VIAS…VAGF), and 180–200 (AFAH…IVVW).

It belongs to the CbiM family.

Its subcellular location is the cell membrane. In terms of biological role, may be involved in metal transport. This Methanocaldococcus jannaschii (strain ATCC 43067 / DSM 2661 / JAL-1 / JCM 10045 / NBRC 100440) (Methanococcus jannaschii) protein is Putative metal transport protein MJ1569.